We begin with the raw amino-acid sequence, 369 residues long: Aminomethyltransferase (369 aa).

This sequence belongs to the GcvT family. As to quaternary structure, the glycine cleavage system is composed of four proteins: P, T, L and H.

The enzyme catalyses N(6)-[(R)-S(8)-aminomethyldihydrolipoyl]-L-lysyl-[protein] + (6S)-5,6,7,8-tetrahydrofolate = N(6)-[(R)-dihydrolipoyl]-L-lysyl-[protein] + (6R)-5,10-methylene-5,6,7,8-tetrahydrofolate + NH4(+). Functionally, the glycine cleavage system catalyzes the degradation of glycine. The sequence is that of Aminomethyltransferase from Alkaliphilus metalliredigens (strain QYMF).